The following is a 239-amino-acid chain: Lysophospholipase-like protein 1 (239 aa).

A2 carries the post-translational modification N-acetylalanine. Catalysis depends on charge relay system residues S125, D180, and H212.

This sequence belongs to the AB hydrolase superfamily. AB hydrolase 2 family.

It localises to the cytoplasm. The protein resides in the cytosol. It catalyses the reaction S-hexadecanoyl-L-cysteinyl-[protein] + H2O = L-cysteinyl-[protein] + hexadecanoate + H(+). Functionally, palmitoyl thioesterase that catalyzes depalmitoylation of CGAS and KCNMA1. Acts as a regulator of innate immunity by mediating depalmitoylation of CGAS, thereby preventing CGAS homodimerization and cyclic GMP-AMP synthase activity. Does not exhibit phospholipase nor triacylglycerol lipase activity, able to hydrolyze only short chain substrates due to its shallow active site. This is Lysophospholipase-like protein 1 from Mus musculus (Mouse).